We begin with the raw amino-acid sequence, 489 residues long: Beta-glucosidase 14 (489 aa).

An N-terminal signal peptide occupies residues 1–21 (MTSKYFSVLVFIILASNEVVA). Glutamine 49 is an a beta-D-glucoside binding site. N-linked (GlcNAc...) asparagine glycosylation is present at asparagine 80. A beta-D-glucoside contacts are provided by residues histidine 153 and 198-199 (NE). Glutamate 199 acts as the Proton donor in catalysis. An intrachain disulfide couples cysteine 218 to cysteine 226. Asparagine 225 is a glycosylation site (N-linked (GlcNAc...) asparagine). Tyrosine 343 contributes to the a beta-D-glucoside binding site. Asparagine 357 is a glycosylation site (N-linked (GlcNAc...) asparagine). Residues glutamate 396, tryptophan 441, 448–449 (EW), and phenylalanine 457 each bind a beta-D-glucoside. Residue glutamate 396 is the Nucleophile of the active site.

This sequence belongs to the glycosyl hydrolase 1 family.

It catalyses the reaction Hydrolysis of terminal, non-reducing beta-D-glucosyl residues with release of beta-D-glucose.. The sequence is that of Beta-glucosidase 14 from Arabidopsis thaliana (Mouse-ear cress).